A 171-amino-acid polypeptide reads, in one-letter code: uncharacterized protein (171 aa).

Positions 56–83 are disordered; the sequence is TVGVNKNAKNGPTQSQTRSGSAGAQARM. The span at 57–77 shows a compositional bias: polar residues; that stretch reads VGVNKNAKNGPTQSQTRSGSA. A J domain is found at 113 to 170; the sequence is KAFETLGLGASATTADIKAAYKDLVKKHHPDANGGDRGSEERFRAVIQAYQLLKQAGF.

This is an uncharacterized protein from Sinorhizobium sp.